A 25-amino-acid polypeptide reads, in one-letter code: GLFKVLGSVAKHLLPHVAPIIAEKL.

Leu-25 is modified (leucine amide).

It belongs to the frog skin active peptide (FSAP) family. Caerin subfamily. In terms of tissue distribution, expressed by the skin dorsal glands.

Its subcellular location is the secreted. Caerin-1.19 shows significant activity against Gram-positive organisms, but is less effective against Gram-negative organisms. The chain is Caerin-1.19 from Ranoidea gracilenta (Dainty green tree frog).